Reading from the N-terminus, the 420-residue chain is 3-isopropylmalate dehydratase large subunit (420 aa).

The [4Fe-4S] cluster site is built by Cys300, Cys360, and Cys363.

It belongs to the aconitase/IPM isomerase family. LeuC type 2 subfamily. Heterodimer of LeuC and LeuD. Requires [4Fe-4S] cluster as cofactor.

It carries out the reaction (2R,3S)-3-isopropylmalate = (2S)-2-isopropylmalate. The protein operates within amino-acid biosynthesis; L-leucine biosynthesis; L-leucine from 3-methyl-2-oxobutanoate: step 2/4. Its function is as follows. Catalyzes the isomerization between 2-isopropylmalate and 3-isopropylmalate, via the formation of 2-isopropylmaleate. The protein is 3-isopropylmalate dehydratase large subunit of Syntrophus aciditrophicus (strain SB).